The primary structure comprises 294 residues: Nucleotide-binding protein CLK_2809 (294 aa).

An ATP-binding site is contributed by 8–15 (GLSGAGKT). A GTP-binding site is contributed by 59 to 62 (DIRG).

This sequence belongs to the RapZ-like family.

Functionally, displays ATPase and GTPase activities. This chain is Nucleotide-binding protein CLK_2809, found in Clostridium botulinum (strain Loch Maree / Type A3).